The sequence spans 168 residues: Cofilin-1-A (168 aa).

Ala-2 is subject to N-acetylalanine. Residues 4–153 enclose the ADF-H domain; the sequence is GVMVSDDVIK…NDPCNLADKL (150 aa). Positions 30 to 34 match the Nuclear localization signal motif; it reads KKRKK.

This sequence belongs to the actin-binding proteins ADF family. Inactive when phosphorylated. Phosphorylation levels vary during development. Oocytes contain only the phosphorylated form, and 80-95% of cfl1 protein is phosphorylated in unfertilized eggs. Rapid dephosphorylation occurs within 30 minutes after fertilization. Phosphorylation levels increase again between the morula and blastula stages (5-8 hpf) and then decrease again as gastrulation approaches. Dephosphorylated by pdxp. Expressed diffusely in both animal and vegetal hemispheres of the oocyte. During cleavage, expression accumulates around the cleavage furrow, along the vegetal membrane, and later in the midbody. Strongly expressed in the animal hemisphere during blastula stages, with most cells showing expression by gastrulation. By stage 17, expression is highest in cells of the developing neuroectoderm, and at stage 24 the notochord, neural tube, neural crest, somites and some cells of the archenteron show high expression. By stage 35, expression has declined in the notochord, but remains in the neural tube, epidermis and a layer of cells in the archenteron. Also highly expressed in the retina and neuronal cell bodies at the base of the cement gland but not the cement gland itself. At stage 38, expression is widespread, being highest in the nervous system and retina. In the adult, expression is high in the brain, heart, oocyte, stomach, and low in skeletal muscle.

The protein resides in the nucleus matrix. Its subcellular location is the cytoplasm. It is found in the cytoskeleton. The protein localises to the cell cortex. It localises to the membrane. Its function is as follows. May play a role in the regulation of cell morphology and cytoskeletal organization. Binds to F-actin and exhibits pH-sensitive F-actin depolymerizing activity. Required for formation of the cleavage furrow during cytokinesis. The protein is Cofilin-1-A (cfl1-a) of Xenopus laevis (African clawed frog).